Here is a 455-residue protein sequence, read N- to C-terminus: Probable ATP-dependent RNA helicase DDX47 (455 aa).

Positions 1–10 (MAAPEEHDSP) are enriched in basic and acidic residues. A disordered region spans residues 1–20 (MAAPEEHDSPTEASQPIVEE). Ala-2 carries the post-translational modification N-acetylalanine. Ser-9 bears the Phosphoserine mark. The Q motif motif lies at 24–52 (KTFKDLGVTDVLCEACDQLGWTKPTKIQI). Residues 55 to 226 (IPLALQGRDI…RAALKNPVKC (172 aa)) form the Helicase ATP-binding domain. Residue 68–75 (AETGSGKT) coordinates ATP. Residue Thr-149 is modified to Phosphothreonine. The DEAD box motif lies at 174 to 177 (DEAD). Residues 237–397 (KLQQYYIFIP…GFPTQDDEVM (161 aa)) enclose the Helicase C-terminal domain. The span at 413–428 (ELREHGEKKKRSREDA) shows a compositional bias: basic and acidic residues. The segment at 413–455 (ELREHGEKKKRSREDAGDNDDTEGAIGVRNKVAGGKMKKRKGR) is disordered. Ser-424 is modified (phosphoserine).

Belongs to the DEAD box helicase family. DDX47/RRP3 subfamily. In terms of assembly, interacts with AGO1 and AGO2. Interacts with GABARAP. Interacts with NOL8; the interaction is RNA-dependent. In terms of tissue distribution, expressed in skin, lung and breast. Also expressed in the brain.

The protein localises to the nucleus. The protein resides in the nucleolus. The catalysed reaction is ATP + H2O = ADP + phosphate + H(+). Its function is as follows. Required for efficient ribosome biogenesis. May have a role in mRNA splicing. Involved in apoptosis. The sequence is that of Probable ATP-dependent RNA helicase DDX47 (DDX47) from Homo sapiens (Human).